Consider the following 274-residue polypeptide: Prothoracicostatic peptide (274 aa).

The first 19 residues, Met-1 to Ala-19, serve as a signal peptide directing secretion. A propeptide spanning residues Ala-20–Arg-67 is cleaved from the precursor. A Tryptophan amide modification is found at Trp-76. A propeptide spanning residues Gly-77–Arg-91 is cleaved from the precursor. The residue at position 100 (Trp-100) is a Tryptophan amide. The propeptide occupies Gly-101–Arg-136. At Trp-145 the chain carries Tryptophan amide. A propeptide spanning residues Gly-146–Arg-148 is cleaved from the precursor. At Trp-157 the chain carries Tryptophan amide. The propeptide occupies Gly-158–Arg-172. Position 181 is a tryptophan amide (Trp-181). Positions Gly-182 to Ala-274 are excised as a propeptide.

It localises to the secreted. Inhibits ecdysteroid biosynthesis in the prothoracic gland of fifth instar larvae, with maximum inhibition during the spinning stage. When administered to day 8 fifth instar larvae it produces a significant delay in the commencement spinning behavior. In Bombyx mori (Silk moth), this protein is Prothoracicostatic peptide.